The following is a 320-amino-acid chain: Lipoyl synthase (320 aa).

Residues 1 to 29 (MIGKLVRDLKIPDQRHPEKAHRPDNDQPR) are compositionally biased toward basic and acidic residues. A disordered region spans residues 1 to 32 (MIGKLVRDLKIPDQRHPEKAHRPDNDQPRKPS). C60, C65, C71, C86, C90, C93, and S300 together coordinate [4Fe-4S] cluster. Residues 71 to 289 (CWGQGHATMM…EKAAYGKGFL (219 aa)) form the Radical SAM core domain.

Belongs to the radical SAM superfamily. Lipoyl synthase family. Requires [4Fe-4S] cluster as cofactor.

It localises to the cytoplasm. The enzyme catalyses [[Fe-S] cluster scaffold protein carrying a second [4Fe-4S](2+) cluster] + N(6)-octanoyl-L-lysyl-[protein] + 2 oxidized [2Fe-2S]-[ferredoxin] + 2 S-adenosyl-L-methionine + 4 H(+) = [[Fe-S] cluster scaffold protein] + N(6)-[(R)-dihydrolipoyl]-L-lysyl-[protein] + 4 Fe(3+) + 2 hydrogen sulfide + 2 5'-deoxyadenosine + 2 L-methionine + 2 reduced [2Fe-2S]-[ferredoxin]. Its pathway is protein modification; protein lipoylation via endogenous pathway; protein N(6)-(lipoyl)lysine from octanoyl-[acyl-carrier-protein]: step 2/2. Functionally, catalyzes the radical-mediated insertion of two sulfur atoms into the C-6 and C-8 positions of the octanoyl moiety bound to the lipoyl domains of lipoate-dependent enzymes, thereby converting the octanoylated domains into lipoylated derivatives. In Cereibacter sphaeroides (strain ATCC 17025 / ATH 2.4.3) (Rhodobacter sphaeroides), this protein is Lipoyl synthase.